Consider the following 391-residue polypeptide: Protein Wnt-2b (391 aa).

5 cysteine pairs are disulfide-bonded: Cys107–Cys118, Cys158–Cys166, Cys168–Cys188, Cys237–Cys251, and Cys239–Cys246. Asn117 is a glycosylation site (N-linked (GlcNAc...) asparagine). Residue Ser243 is the site of O-palmitoleoyl serine; by PORCN attachment. Asn283 is a glycosylation site (N-linked (GlcNAc...) asparagine). Disulfide bonds link Cys309–Cys340, Cys325–Cys335, Cys339–Cys379, Cys355–Cys370, Cys357–Cys367, and Cys362–Cys363.

The protein belongs to the Wnt family. In terms of assembly, forms a soluble 1:1 complex with AFM; this prevents oligomerization and is required for prolonged biological activity. The complex with AFM may represent the physiological form in body fluids. Interacts with FZD4 and FZD5. In terms of processing, palmitoleoylation is required for efficient binding to frizzled receptors. Depalmitoleoylation leads to Wnt signaling pathway inhibition. As to expression, isoform 1 is expressed in adult heart, brain, placenta, lung, prostate, testis, ovary, small intestine and colon. In the adult brain, it is mainly found in the caudate nucleus, subthalamic nucleus and thalamus. Also detected in fetal brain, lung and kidney. Isoform 2 is expressed in fetal brain, fetal lung, fetal kidney, caudate nucleus, testis and cancer cell lines.

The protein localises to the secreted. The protein resides in the extracellular space. It is found in the extracellular matrix. Ligand for members of the frizzled family of seven transmembrane receptors. Functions in the canonical Wnt/beta-catenin signaling pathway. Plays a redundant role in embryonic lung development. The protein is Protein Wnt-2b (WNT2B) of Homo sapiens (Human).